Here is a 153-residue protein sequence, read N- to C-terminus: Deoxyuridine 5'-triphosphate nucleotidohydrolase (153 aa).

Residues 71–73 (RSG), N84, 88–90 (TID), and K98 contribute to the substrate site.

The protein belongs to the dUTPase family. Requires Mg(2+) as cofactor.

The enzyme catalyses dUTP + H2O = dUMP + diphosphate + H(+). It participates in pyrimidine metabolism; dUMP biosynthesis; dUMP from dCTP (dUTP route): step 2/2. Its function is as follows. This enzyme is involved in nucleotide metabolism: it produces dUMP, the immediate precursor of thymidine nucleotides and it decreases the intracellular concentration of dUTP so that uracil cannot be incorporated into DNA. The sequence is that of Deoxyuridine 5'-triphosphate nucleotidohydrolase from Wolbachia pipientis subsp. Culex pipiens (strain wPip).